The primary structure comprises 614 residues: V-type proton ATPase catalytic subunit A (614 aa).

247–254 (GAFGCGKT) contacts ATP.

Belongs to the ATPase alpha/beta chains family. V-ATPase is a heteromultimeric enzyme made up of two complexes: the ATP-hydrolytic V1 complex and the proton translocation V0 complex. The V1 complex consists of three catalytic AB heterodimers that form a heterohexamer, three peripheral stalks each consisting of EG heterodimers, one central rotor including subunits D and F, and the regulatory subunits C and H. The proton translocation complex V0 consists of the proton transport subunit a, a ring of proteolipid subunits c9c'', rotary subunit d, subunits e and f, and the accessory subunits VhaAC45 and ATP6AP2.

The enzyme catalyses ATP + H2O + 4 H(+)(in) = ADP + phosphate + 5 H(+)(out). ATP hydrolysis occurs at the interface between the nucleotide-binding domains of subunits A and B. ATP hydrolysis triggers a conformational change in the subunits D and F, which induces a shift of subunit d. The c-ring is subsequently rotated and results in a continuous proton translocation across the membrane. Functionally, catalytic subunit of the V1 complex of vacuolar(H+)-ATPase (V-ATPase), a multisubunit enzyme composed of a peripheral complex (V1) that hydrolyzes ATP and a membrane integral complex (V0) that translocates protons. V-ATPase is responsible for acidifying and maintaining the pH of intracellular compartments and in some cell types, is targeted to the plasma membrane, where it is responsible for acidifying the extracellular environment. This Anopheles gambiae (African malaria mosquito) protein is V-type proton ATPase catalytic subunit A.